Reading from the N-terminus, the 772-residue chain is E3 ubiquitin-protein ligase UHRF1 (772 aa).

The 77-residue stretch at 1–77 (MWIQVRTMDG…IVQLLVRQIP (77 aa)) folds into the Ubiquitin-like domain. The segment at 90 to 111 (SDASAGCGSGQRDSDSGSGEGA) is disordered. Tudor-like stretches follow at residues 129–205 (SLYK…LRAR) and 212–281 (EIKV…IEEP). A linker region spans residues 291–299 (PQKRQNGPE). The segment at 297–364 (GPECKHCKDN…DWYCPDCRND (68 aa)) adopts a PHD-type zinc-finger fold. Histone H3R2me0 binding stretches follow at residues 331–335 (CDECD) and 351–353 (PQD). The 164-residue stretch at 417–580 (GPIPGVPVGT…FLVWRYLLRR (164 aa)) folds into the YDG domain. A required to promote base flipping region spans residues 443-444 (HV). DNA-binding positions include 461–462 (AG) and aspartate 467. 2 required for formation of a 5-methylcytosine-binding pocket regions span residues 464–467 (YEDD) and 476–479 (YTGS). A compositionally biased stretch (basic and acidic residues) spans 615–626 (SKEREKENKTED). The segment at 615–649 (SKEREKENKTEDEPIDSPSKGKRKRNSDNEQTAAK) is disordered. The segment at 703–742 (CICCQEVVYEPVTTECHHNICKGCLDRSFKALVHSCPACR) adopts an RING-type zinc-finger fold.

The protein localises to the nucleus. It catalyses the reaction S-ubiquitinyl-[E2 ubiquitin-conjugating enzyme]-L-cysteine + [acceptor protein]-L-lysine = [E2 ubiquitin-conjugating enzyme]-L-cysteine + N(6)-ubiquitinyl-[acceptor protein]-L-lysine.. Its pathway is protein modification; protein ubiquitination. Functionally, multidomain protein that acts as a key epigenetic regulator by bridging DNA methylation and chromatin modification. Specifically recognizes and binds hemimethylated DNA at replication forks via its YDG domain and recruits dnmt1 methyltransferase to ensure faithful propagation of the DNA methylation patterns through DNA replication. In addition to its role in maintenance of DNA methylation, also plays a key role in chromatin modification: through its tudor-like regions and PHD-type zinc fingers, specifically recognizes and binds histone H3 trimethylated at 'Lys-9' (H3K9me3) and unmethylated at 'Arg-2' (H3R2me0), respectively, and recruits chromatin proteins. Enriched in pericentric heterochromatin where it recruits different chromatin modifiers required for this chromatin replication. Also localizes to euchromatic regions where it negatively regulates transcription possibly by impacting DNA methylation and histone modifications. Has E3 ubiquitin-protein ligase activity by mediating the ubiquitination of target proteins. However, it is still unclear how E3 ubiquitin-protein ligase activity is related to its role in chromatin in vivo. This is E3 ubiquitin-protein ligase UHRF1 (uhrf1) from Xenopus laevis (African clawed frog).